The following is a 111-amino-acid chain: Universal stress protein B (111 aa).

The next 2 membrane-spanning stretches (helical) occupy residues 1–21 (MINTVALFWALFIVCVVNMLR) and 90–110 (FILTSALCGLVVVALIALMLW).

Belongs to the universal stress protein B family.

It localises to the cell inner membrane. This chain is Universal stress protein B, found in Edwardsiella ictaluri (strain 93-146).